Consider the following 51-residue polypeptide: Astexin-1 (51 aa).

Positions 1 to 28 are excised as a propeptide; the sequence is MHTPIISETVQPKTAGLIVLGKASAETR. Positions 29–37 form a cross-link, isoaspartyl glycine isopeptide (Gly-Asp); that stretch reads GLSQGVEPD.

In terms of processing, this lasso peptide is probably hydrolyzed to a linear form by the isopeptidase AtxE1, in vivo.

Its function is as follows. Shows weak antimicrobial activity against its phylogenetic relative Caulobacter crescentus. Does not show activity against other bacteria tested (E.coli, Vibrio sp, Burkhoderia thailandensis, and Salmonella newport). This chain is Astexin-1, found in Asticcacaulis excentricus (strain ATCC 15261 / DSM 4724 / KCTC 12464 / NCIMB 9791 / VKM B-1370 / CB 48).